The sequence spans 282 residues: MAITAAQVKELRDRTGAGMMDCKKALTETNGDIELAIDNMRKSGAAKAAKKAGNIAAEGAILIKNGEGFAALLEVNCQTDFVAKDANFLAFANSVLDVASAAKVSIEDLKAQFEETRVALVAKIGENINVRRVEYIDGANLAQYRHGERIGVVVAGEADEETLKHVAMHVAASKPEFVNPEDVPADLVEKEKALQIEIAMNEGKPAEIAEKMVIGRMKKFTGEISLTGQAYIMEPKKTVGAVLKEKGASVSNFIRLEVGEGIAKKEEDFAAEVAAQIAATKG.

An involved in Mg(2+) ion dislocation from EF-Tu region spans residues 79–82 (TDFV).

It belongs to the EF-Ts family.

The protein localises to the cytoplasm. In terms of biological role, associates with the EF-Tu.GDP complex and induces the exchange of GDP to GTP. It remains bound to the aminoacyl-tRNA.EF-Tu.GTP complex up to the GTP hydrolysis stage on the ribosome. The polypeptide is Elongation factor Ts (Shewanella piezotolerans (strain WP3 / JCM 13877)).